The sequence spans 180 residues: Bifunctional protein PyrR (180 aa).

Positions 99 to 111 (VILVDDVLYTCRT) match the PRPP-binding motif.

It belongs to the purine/pyrimidine phosphoribosyltransferase family. PyrR subfamily. Homodimer and homohexamer; in equilibrium.

The catalysed reaction is UMP + diphosphate = 5-phospho-alpha-D-ribose 1-diphosphate + uracil. Its function is as follows. Regulates transcriptional attenuation of the pyrimidine nucleotide (pyr) operon by binding in a uridine-dependent manner to specific sites on pyr mRNA. This disrupts an antiterminator hairpin in the RNA and favors formation of a downstream transcription terminator, leading to a reduced expression of downstream genes. In terms of biological role, also displays a weak uracil phosphoribosyltransferase activity which is not physiologically significant. The chain is Bifunctional protein PyrR from Clostridium botulinum (strain Alaska E43 / Type E3).